Here is a 165-residue protein sequence, read N- to C-terminus: 5-formyltetrahydrofolate cyclo-ligase (165 aa).

An ATP-binding site is contributed by 4–8; the sequence is KNSLR. Isoleucine 51 and glutamate 56 together coordinate substrate. 116 to 124 contributes to the ATP binding site; the sequence is RIGFGKGYY. Aspartate 125 lines the Mg(2+) pocket. ATP is bound by residues arginine 126 and tryptophan 154. Aspartate 155 is a Mg(2+) binding site.

This sequence belongs to the 5-formyltetrahydrofolate cyclo-ligase family. In terms of assembly, monomer or homodimer. The cofactor is Mg(2+).

It is found in the cytoplasm. It carries out the reaction (6S)-5-formyl-5,6,7,8-tetrahydrofolate + ATP = (6R)-5,10-methenyltetrahydrofolate + ADP + phosphate. In terms of biological role, involved in folate metabolism. Catalyzes the irreversible conversion of 5-formyltetrahydrofolate (5-FTHF) to yield 5,10-methenyltetrahydrofolate. The chain is 5-formyltetrahydrofolate cyclo-ligase from Mycoplasma genitalium (strain ATCC 33530 / DSM 19775 / NCTC 10195 / G37) (Mycoplasmoides genitalium).